Consider the following 61-residue polypeptide: Short neurotoxin 2 (61 aa).

Disulfide bonds link cysteine 3-cysteine 23, cysteine 17-cysteine 40, cysteine 42-cysteine 53, and cysteine 54-cysteine 59.

It belongs to the three-finger toxin family. Short-chain subfamily. Type I alpha-neurotoxin sub-subfamily. As to expression, expressed by the venom gland.

It is found in the secreted. Its function is as follows. Binds to muscle nicotinic acetylcholine receptor (nAChR) and inhibit acetylcholine from binding to the receptor, thereby impairing neuromuscular transmission. This is Short neurotoxin 2 from Hemachatus haemachatus (Rinkhals).